The sequence spans 213 residues: Putative manganese efflux pump MntP (213 aa).

6 consecutive transmembrane segments (helical) span residues 3-23 (ILSI…VSVA), 36-56 (ALKV…IGWG), 67-87 (AFDH…MIFE), 130-150 (LAIA…FLGI), 152-172 (IVQT…LGVI), and 187-207 (IVGG…HTGI).

This sequence belongs to the MntP (TC 9.B.29) family.

It localises to the cell membrane. In terms of biological role, probably functions as a manganese efflux pump. This is Putative manganese efflux pump MntP from Clostridium perfringens (strain SM101 / Type A).